We begin with the raw amino-acid sequence, 440 residues long: MATRSCREKAQKLNEQHQLILSKLLREEDNKYCADCEAKGPRWASWNIGVFICIRCAGIHRNLGVHISRVKSVNLDQWTPEQIQCMQDMGNTKARLLYEANLPENFRRPQTDQAVEFFIRDKYEKKKYYDKNAIAITNKEKEKKKDEKKREKEPEKPAKPLTTEKLPKKEEQQLEPKKSTSPKNAAEPTIDLLGLDGPAEAPVTNGNPATAPALSDDLDIFGPMISNPLPAAVMPPAQGTASVPAPATLSTVTSGDLDLFTEQTTKSEEVAKKQLSKDSILSLYGTGAQQSTPGVFMGPTNIPFTSQAPTAFQGFPSMGVPVPAAPGLIGNMMGQNTGMMVGMPMHNGFMGNAQTGVMPLPQNVVGPQGGMVGQMGAPQSKFGLPQAQQPQWNLSQMNQQMAAMNLSSANASAGFGQPPSTTAGWSGSSSGQTLSTQLWK.

Positions 18–143 constitute an Arf-GAP domain; the sequence is QLILSKLLRE…IAITNKEKEK (126 aa). A C4-type zinc finger spans residues 33 to 56; that stretch reads CADCEAKGPRWASWNIGVFICIRC. Composition is skewed to basic and acidic residues over residues 140-158 and 165-178; these read EKEK…EKPA and KLPK…EPKK. Disordered regions lie at residues 140–211 and 410–440; these read EKEK…PATA and NASA…QLWK. Residues 192 to 196 carry the Interaction with clathrin heavy chains motif; the sequence is LLGLD. Residues 420 to 440 show a composition bias toward low complexity; sequence STTAGWSGSSSGQTLSTQLWK.

In terms of assembly, interacts with ARF6. Interacts with clathrin heavy chains via the clathrin box-like motif. As to expression, detected in adult brain, lung, heart, liver, ovary and bone marrow. Detected in stromal cells of the red pulp of adult spleen.

Its subcellular location is the cell membrane. Functionally, GTPase activating protein that acts on ARF6. Plays a role in clathrin-dependent endocytosis. May play a role in erythropoiesis. The protein is Stromal membrane-associated protein 1 (Smap1) of Mus musculus (Mouse).